Consider the following 72-residue polypeptide: Protein SlyX homolog (72 aa).

It belongs to the SlyX family.

The polypeptide is Protein SlyX homolog (Bradyrhizobium diazoefficiens (strain JCM 10833 / BCRC 13528 / IAM 13628 / NBRC 14792 / USDA 110)).